We begin with the raw amino-acid sequence, 598 residues long: Membrane protein insertase YidC (598 aa).

A helical membrane pass occupies residues Asn-7–Met-27. Residues Ala-37 to Gln-71 form a disordered region. Low complexity predominate over residues Ala-40 to Gln-71. A run of 4 helical transmembrane segments spans residues Phe-373–Phe-393, Trp-447–Ile-467, Leu-492–Ile-512, and Trp-538–Trp-558.

The protein belongs to the OXA1/ALB3/YidC family. Type 1 subfamily. As to quaternary structure, interacts with the Sec translocase complex via SecD. Specifically interacts with transmembrane segments of nascent integral membrane proteins during membrane integration.

The protein resides in the cell inner membrane. Required for the insertion and/or proper folding and/or complex formation of integral membrane proteins into the membrane. Involved in integration of membrane proteins that insert both dependently and independently of the Sec translocase complex, as well as at least some lipoproteins. Aids folding of multispanning membrane proteins. This is Membrane protein insertase YidC from Rhizobium etli (strain CIAT 652).